The following is a 178-amino-acid chain: N-alpha-acetyltransferase 80 (178 aa).

The N-acetyltransferase domain occupies 26 to 178 (VPIHNYPELM…AKKKYMKKVL (153 aa)). Residues R48, 53–56 (RMRS), N88, and S98 each bind substrate. Acetyl-CoA contacts are provided by residues 99–101 (VVV) and 107–112 (GQGFGK). Residue S134 coordinates substrate. Residue Q138 participates in acetyl-CoA binding.

Belongs to the acetyltransferase family.

The catalysed reaction is N-terminal L-aspartyl-L-aspartyl-L-aspartyl-[protein] + acetyl-CoA = N-terminal N-acetyl-L-aspartyl-L-aspartyl-L-aspartyl-[protein] + CoA + H(+). It catalyses the reaction N-terminal L-glutamyl-L-glutamyl-L-glutamyl-[protein] + acetyl-CoA = N-terminal N-acetyl-L-glutamyl-L-glutamyl-L-glutamyl-[protein] + CoA + H(+). Functionally, N-alpha-acetyltransferase that acetylates the amino terminal acidic residue of proteins devoid of initiator methionine. Preferentially acts on proteins starting with Asp-Asp-Asp and Glu-Glu-Glu sequences. In vitro, shows high activity towards N-terminal sequences starting with Met-Asp-Glu-Leu, Met-Glu-Glu-Glu and Met-Asp-Asp-Asp. The polypeptide is N-alpha-acetyltransferase 80 (Drosophila melanogaster (Fruit fly)).